The chain runs to 167 residues: Leptin (167 aa).

The first 21 residues, 1–21, serve as a signal peptide directing secretion; the sequence is MCWRPLCRFLWLWSYLSYVQA. Cys-117 and Cys-167 form a disulfide bridge.

It belongs to the leptin family.

Its subcellular location is the secreted. Key player in the regulation of energy balance and body weight control. Once released into the circulation, has central and peripheral effects by binding LEPR, found in many tissues, which results in the activation of several major signaling pathways. In the hypothalamus, acts as an appetite-regulating factor that induces a decrease in food intake and an increase in energy consumption by inducing anorexinogenic factors and suppressing orexigenic neuropeptides, also regulates bone mass and secretion of hypothalamo-pituitary-adrenal hormones. In the periphery, increases basal metabolism, influences reproductive function, regulates pancreatic beta-cell function and insulin secretion, is pro-angiogenic for endothelial cell and affects innate and adaptive immunity. In the arcuate nucleus of the hypothalamus, activates by depolarization POMC neurons inducing FOS and SOCS3 expression to release anorexigenic peptides and inhibits by hyperpolarization NPY neurons inducing SOCS3 with a consequent reduction on release of orexigenic peptides. In addition to its known satiety inducing effect, has a modulatory role in nutrient absorption. In the intestine, reduces glucose absorption by enterocytes by activating PKC and leading to a sequential activation of p38, PI3K and ERK signaling pathways which exerts an inhibitory effect on glucose absorption. Acts as a growth factor on certain tissues, through the activation of different signaling pathways increases expression of genes involved in cell cycle regulation such as CCND1, via JAK2-STAT3 pathway, or VEGFA, via MAPK1/3 and PI3K-AKT1 pathways. May also play an apoptotic role via JAK2-STAT3 pathway and up-regulation of BIRC5 expression. Pro-angiogenic, has mitogenic activity on vascular endothelial cells and plays a role in matrix remodeling by regulating the expression of matrix metalloproteinases (MMPs) and tissue inhibitors of metalloproteinases (TIMPs). In innate immunity, modulates the activity and function of neutrophils by increasing chemotaxis and the secretion of oxygen radicals. Increases phagocytosis by macrophages and enhances secretion of pro-inflammatory mediators. Increases cytotoxic ability of NK cells. Plays a pro-inflammatory role, in synergy with IL1B, by inducing NOS2 which promotes the production of IL6, IL8 and Prostaglandin E2, through a signaling pathway that involves JAK2, PI3K, MAP2K1/MEK1 and MAPK14/p38. In adaptive immunity, promotes the switch of memory T-cells towards T helper-1 cell immune responses. Increases CD4(+)CD25(-) T cells proliferation and reduces autophagy during TCR (T cell receptor) stimulation, through MTOR signaling pathway activation and BCL2 up-regulation. The protein is Leptin (Lep) of Mus musculus (Mouse).